A 123-amino-acid chain; its full sequence is Large ribosomal subunit protein bL12 (123 aa).

This sequence belongs to the bacterial ribosomal protein bL12 family. Homodimer. Part of the ribosomal stalk of the 50S ribosomal subunit. Forms a multimeric L10(L12)X complex, where L10 forms an elongated spine to which 2 to 4 L12 dimers bind in a sequential fashion. Binds GTP-bound translation factors.

Functionally, forms part of the ribosomal stalk which helps the ribosome interact with GTP-bound translation factors. Is thus essential for accurate translation. The sequence is that of Large ribosomal subunit protein bL12 from Ectopseudomonas mendocina (strain ymp) (Pseudomonas mendocina).